The chain runs to 400 residues: D(3) dopamine receptor (400 aa).

At 1–32 (MASLSQLSGHLNYTCGAENSTGASQARPHAYY) the chain is on the extracellular side. N12 and N19 each carry an N-linked (GlcNAc...) asparagine glycan. A helical membrane pass occupies residues 33-55 (ALSYCALILAIVFGNGLVCMAVL). Residues 56-65 (KERALQTTTN) lie on the Cytoplasmic side of the membrane. The helical transmembrane segment at 66–88 (YLVVSLAVADLLVATLVMPWVVY) threads the bilayer. Residues 89-104 (LEVTGGVWNFSRICCD) lie on the Extracellular side of the membrane. N-linked (GlcNAc...) asparagine glycosylation occurs at N97. Cysteines 103 and 181 form a disulfide. A helical transmembrane segment spans residues 105 to 126 (VFVTLDVMMCTASILNLCAISI). D110 is a binding site for eticlopride. Residues 127-149 (DRYTAVVMPVHYQHGTGQSSCRR) lie on the Cytoplasmic side of the membrane. Residues 150–170 (VALMITAVWVLAFAVSCPLLF) traverse the membrane as a helical segment. The Extracellular segment spans residues 171–187 (GFNTTGDPTVCSISNPD). N-linked (GlcNAc...) asparagine glycosylation is present at N173. The helical transmembrane segment at 188–209 (FVIYSSVVSFYLPFGVTVLVYA) threads the bilayer. Topologically, residues 210 to 329 (RIYVVLKQRR…VPLREKKATQ (120 aa)) are cytoplasmic. Residues 330–351 (MVAIVLGAFIVCWLPFFLTHVL) traverse the membrane as a helical segment. F345 and H349 together coordinate eticlopride. Topologically, residues 352 to 366 (NTHCQTCHVSPELYS) are extracellular. Cysteines 355 and 358 form a disulfide. Residues 367–386 (ATTWLGYVNSALNPVIYTTF) form a helical membrane-spanning segment. Over 387–400 (NIEFRKAFLKILSC) the chain is Cytoplasmic.

The protein belongs to the G-protein coupled receptor 1 family. In terms of assembly, interacts with CLIC6. Interacts with GRK4. Interacts with PALM. Interacts with FLNA (via filamin repeat 21); increases PKA-mediated phosphorylation of FLNA. Post-translationally, phosphorylated by GRK4 (GRK4-alpha and GRK4-gamma). Palmitoylated. Brain.

Its subcellular location is the cell membrane. Functionally, dopamine receptor whose activity is mediated by G proteins which inhibit adenylyl cyclase. Promotes cell proliferation. In Homo sapiens (Human), this protein is D(3) dopamine receptor.